Reading from the N-terminus, the 372-residue chain is N-methyl-L-tryptophan oxidase (372 aa).

Position 4–34 (4–34 (DLIIIGSGSVGAAAGYYATRAGLKVLMTDAH)) interacts with FAD. Cysteine 307 carries the S-8alpha-FAD cysteine modification.

Belongs to the MSOX/MTOX family. MTOX subfamily. Monomer. It depends on FAD as a cofactor.

It carries out the reaction N(alpha)-methyl-L-tryptophan + O2 + H2O = L-tryptophan + formaldehyde + H2O2. Its function is as follows. Catalyzes the oxidative demethylation of N-methyl-L-tryptophan. The protein is N-methyl-L-tryptophan oxidase of Salmonella dublin (strain CT_02021853).